The following is a 127-amino-acid chain: Small ribosomal subunit protein uS13 (127 aa).

The interval 100-127 (GQRTRTNARTRKGVRKTVAGKKKAPAKK) is disordered. The segment covering 101–127 (QRTRTNARTRKGVRKTVAGKKKAPAKK) has biased composition (basic residues).

Belongs to the universal ribosomal protein uS13 family. Part of the 30S ribosomal subunit. Forms a loose heterodimer with protein S19. Forms two bridges to the 50S subunit in the 70S ribosome.

Functionally, located at the top of the head of the 30S subunit, it contacts several helices of the 16S rRNA. In the 70S ribosome it contacts the 23S rRNA (bridge B1a) and protein L5 of the 50S subunit (bridge B1b), connecting the 2 subunits; these bridges are implicated in subunit movement. Contacts the tRNAs in the A and P-sites. This is Small ribosomal subunit protein uS13 from Synechococcus sp. (strain JA-3-3Ab) (Cyanobacteria bacterium Yellowstone A-Prime).